Reading from the N-terminus, the 373-residue chain is Forkhead box protein F1 (373 aa).

The segment at 1 to 51 is disordered; the sequence is MTAEIQQPPSQPPAQSSPMSAATDKHGGQPSVMESANCATKTKKTNAGIRR. Over residues 13–22 the composition is skewed to low complexity; sequence PAQSSPMSAA. The fork-head DNA-binding region spans 54–148; the sequence is KPPYSYIALI…EEGSFRRRPR (95 aa). 2 disordered regions span residues 236-255 and 283-306; these read GSSG…LGGG and QPLS…SLDQ. Positions 286 to 306 are enriched in low complexity; the sequence is SPCNSAANPLSSSLSSHSLDQ.

The protein resides in the nucleus. Probable transcription factor. Required for smooth muscle (visceral mesoderm) differentiation during gut development. Also required for normal proliferation of the lateral plate mesoderm. Acts as a downstream mediator of bmp4-signaling. The polypeptide is Forkhead box protein F1 (Xenopus tropicalis (Western clawed frog)).